Reading from the N-terminus, the 146-residue chain is Large ribosomal subunit protein uL13 (146 aa).

Belongs to the universal ribosomal protein uL13 family. Part of the 50S ribosomal subunit.

This protein is one of the early assembly proteins of the 50S ribosomal subunit, although it is not seen to bind rRNA by itself. It is important during the early stages of 50S assembly. The sequence is that of Large ribosomal subunit protein uL13 from Mycoplasma genitalium (strain ATCC 33530 / DSM 19775 / NCTC 10195 / G37) (Mycoplasmoides genitalium).